Reading from the N-terminus, the 478-residue chain is CDK5 and ABL1 enzyme substrate 2 (478 aa).

Residues 1–121 (MAAAAAGGAP…GLGLDGQRQR (121 aa)) are disordered. Over residues 11 to 24 (GPAPGPAGPPPPAA) the composition is skewed to pro residues. The segment covering 25–35 (PTSAARAPPQA) has biased composition (low complexity). Residues 36 to 46 (LRRRGDSRRRQ) show a composition bias toward basic residues. The segment covering 69–92 (EKPPPPPAEAREPPAPPPPEPPTG) has biased composition (pro residues). Phosphoserine is present on residues S130 and S208. The interval 257–296 (SDSHGLLPTPRPSVPRTLPGSRHKPAPTKSAPASTELGSD) is disordered.

Belongs to the cyclin family. Binds to CDK3, CDK5 and ABL1. The C-terminal cyclin-box-like region binds to CDK5.

Unknown. Probably involved in G1-S cell cycle transition. In Homo sapiens (Human), this protein is CDK5 and ABL1 enzyme substrate 2 (CABLES2).